A 297-amino-acid chain; its full sequence is Acetyl-coenzyme A carboxylase carboxyl transferase subunit beta (297 aa).

One can recognise a CoA carboxyltransferase N-terminal domain in the interval 27-296 (LWHKCPACEA…PEQAREAAAV (270 aa)). Zn(2+) contacts are provided by Cys31, Cys34, Cys50, and Cys53. A C4-type zinc finger spans residues 31–53 (CPACEAVLYRPELEKTLDVCPKC).

The protein belongs to the AccD/PCCB family. As to quaternary structure, acetyl-CoA carboxylase is a heterohexamer composed of biotin carboxyl carrier protein (AccB), biotin carboxylase (AccC) and two subunits each of ACCase subunit alpha (AccA) and ACCase subunit beta (AccD). The cofactor is Zn(2+).

It is found in the cytoplasm. It carries out the reaction N(6)-carboxybiotinyl-L-lysyl-[protein] + acetyl-CoA = N(6)-biotinyl-L-lysyl-[protein] + malonyl-CoA. It participates in lipid metabolism; malonyl-CoA biosynthesis; malonyl-CoA from acetyl-CoA: step 1/1. Functionally, component of the acetyl coenzyme A carboxylase (ACC) complex. Biotin carboxylase (BC) catalyzes the carboxylation of biotin on its carrier protein (BCCP) and then the CO(2) group is transferred by the transcarboxylase to acetyl-CoA to form malonyl-CoA. The protein is Acetyl-coenzyme A carboxylase carboxyl transferase subunit beta of Pseudomonas putida (strain W619).